A 462-amino-acid polypeptide reads, in one-letter code: Glutamate decarboxylase alpha (462 aa).

N6-(pyridoxal phosphate)lysine is present on K273.

Belongs to the group II decarboxylase family. Requires pyridoxal 5'-phosphate as cofactor.

The catalysed reaction is L-glutamate + H(+) = 4-aminobutanoate + CO2. In terms of biological role, converts internalized glutamate to GABA and increases the internal pH. Involved in glutamate-dependent acid resistance in gastric fluid. This chain is Glutamate decarboxylase alpha (gadA), found in Listeria monocytogenes serovar 1/2a (strain ATCC BAA-679 / EGD-e).